A 306-amino-acid polypeptide reads, in one-letter code: UDP-N-acetylenolpyruvoylglucosamine reductase (306 aa).

The FAD-binding PCMH-type domain maps to 34-198 (VGGPADLLIT…LEVTFKLHNS (165 aa)). Arginine 177 is a catalytic residue. Serine 227 acts as the Proton donor in catalysis. Glutamate 297 is a catalytic residue.

This sequence belongs to the MurB family. It depends on FAD as a cofactor.

The protein localises to the cytoplasm. It catalyses the reaction UDP-N-acetyl-alpha-D-muramate + NADP(+) = UDP-N-acetyl-3-O-(1-carboxyvinyl)-alpha-D-glucosamine + NADPH + H(+). It functions in the pathway cell wall biogenesis; peptidoglycan biosynthesis. Functionally, cell wall formation. In Clostridium botulinum (strain Okra / Type B1), this protein is UDP-N-acetylenolpyruvoylglucosamine reductase.